Reading from the N-terminus, the 90-residue chain is DNA-directed RNA polymerase subunit omega (90 aa).

The protein belongs to the RNA polymerase subunit omega family. The RNAP catalytic core consists of 2 alpha, 1 beta, 1 beta' and 1 omega subunit. When a sigma factor is associated with the core the holoenzyme is formed, which can initiate transcription.

The catalysed reaction is RNA(n) + a ribonucleoside 5'-triphosphate = RNA(n+1) + diphosphate. Functionally, promotes RNA polymerase assembly. Latches the N- and C-terminal regions of the beta' subunit thereby facilitating its interaction with the beta and alpha subunits. In Beutenbergia cavernae (strain ATCC BAA-8 / DSM 12333 / CCUG 43141 / JCM 11478 / NBRC 16432 / NCIMB 13614 / HKI 0122), this protein is DNA-directed RNA polymerase subunit omega.